The sequence spans 385 residues: Polyketide synthase 4 (385 aa).

Residue Cys-157 is part of the active site.

The protein belongs to the thiolase-like superfamily. Chalcone/stilbene synthases family. Expressed in glandular trichomes.

The protein resides in the cytoplasm. In terms of biological role, polyketide synthase responsible for the biosynthesis of secondary metabolites. This is Polyketide synthase 4 (PKSG4) from Cannabis sativa (Hemp).